The primary structure comprises 238 residues: ATP-dependent dethiobiotin synthetase BioD (238 aa).

13–18 (EIGKTV) serves as a coordination point for ATP. Mg(2+) is bound at residue T17. Residue K38 is part of the active site. T42 contributes to the substrate binding site. Positions 59 and 111 each coordinate Mg(2+). ATP-binding positions include 111-114 (EGAG), 175-176 (NQ), and 204-206 (PLL).

This sequence belongs to the dethiobiotin synthetase family. As to quaternary structure, homodimer. It depends on Mg(2+) as a cofactor.

It is found in the cytoplasm. The enzyme catalyses (7R,8S)-7,8-diammoniononanoate + CO2 + ATP = (4R,5S)-dethiobiotin + ADP + phosphate + 3 H(+). The protein operates within cofactor biosynthesis; biotin biosynthesis; biotin from 7,8-diaminononanoate: step 1/2. Catalyzes a mechanistically unusual reaction, the ATP-dependent insertion of CO2 between the N7 and N8 nitrogen atoms of 7,8-diaminopelargonic acid (DAPA, also called 7,8-diammoniononanoate) to form a ureido ring. The sequence is that of ATP-dependent dethiobiotin synthetase BioD from Geobacillus kaustophilus (strain HTA426).